Consider the following 404-residue polypeptide: S-adenosylmethionine synthase (404 aa).

His-17 contributes to the ATP binding site. A Mg(2+)-binding site is contributed by Asp-19. Glu-45 serves as a coordination point for K(+). Glu-58 and Gln-101 together coordinate L-methionine. The interval 101–111 (QSPDINRGVDR) is flexible loop. ATP is bound by residues 172–174 (DAK), 245–246 (RF), Asp-254, 260–261 (RK), Ala-277, and Lys-281. L-methionine is bound at residue Asp-254. Residue Lys-285 participates in L-methionine binding.

The protein belongs to the AdoMet synthase family. Homotetramer; dimer of dimers. Mg(2+) serves as cofactor. K(+) is required as a cofactor.

The protein localises to the cytoplasm. It catalyses the reaction L-methionine + ATP + H2O = S-adenosyl-L-methionine + phosphate + diphosphate. Its pathway is amino-acid biosynthesis; S-adenosyl-L-methionine biosynthesis; S-adenosyl-L-methionine from L-methionine: step 1/1. Its function is as follows. Catalyzes the formation of S-adenosylmethionine (AdoMet) from methionine and ATP. The overall synthetic reaction is composed of two sequential steps, AdoMet formation and the subsequent tripolyphosphate hydrolysis which occurs prior to release of AdoMet from the enzyme. The chain is S-adenosylmethionine synthase from Pelodictyon phaeoclathratiforme (strain DSM 5477 / BU-1).